The following is a 226-amino-acid chain: EEF1A lysine methyltransferase 1 (226 aa).

Serine 2 bears the N-acetylserine mark. At serine 2 the chain carries Phosphoserine.

The protein belongs to the class I-like SAM-binding methyltransferase superfamily. EFM5 family.

Its subcellular location is the cytoplasm. The enzyme catalyses L-lysyl-[protein] + 3 S-adenosyl-L-methionine = N(6),N(6),N(6)-trimethyl-L-lysyl-[protein] + 3 S-adenosyl-L-homocysteine + 3 H(+). Protein-lysine methyltransferase that selectively catalyzes the trimethylation of EEF1A at 'Lys-79'. The chain is EEF1A lysine methyltransferase 1 from Bos taurus (Bovine).